A 375-amino-acid chain; its full sequence is Chaperone protein DnaJ (375 aa).

Residues 4-68 enclose the J domain; the sequence is DYYEVLGVGK…QKRAQYDRFG (65 aa). The CR-type zinc finger occupies 129–211; sequence GKETDVEIPK…CRGSGRVKVR (83 aa). Positions 142, 145, 159, 162, 185, 188, 199, and 202 each coordinate Zn(2+). 4 CXXCXGXG motif repeats span residues 142–149, 159–166, 185–192, and 199–206; these read CDTCHGSG, CKTCSGTG, CTTCEGKG, and CSSCRGSG. Residues 349–375 form a disordered region; it reads LSGEKPGQHGGEDEGFFEKMKRAFRGE.

This sequence belongs to the DnaJ family. In terms of assembly, homodimer. Zn(2+) is required as a cofactor.

The protein localises to the cytoplasm. Participates actively in the response to hyperosmotic and heat shock by preventing the aggregation of stress-denatured proteins and by disaggregating proteins, also in an autonomous, DnaK-independent fashion. Unfolded proteins bind initially to DnaJ; upon interaction with the DnaJ-bound protein, DnaK hydrolyzes its bound ATP, resulting in the formation of a stable complex. GrpE releases ADP from DnaK; ATP binding to DnaK triggers the release of the substrate protein, thus completing the reaction cycle. Several rounds of ATP-dependent interactions between DnaJ, DnaK and GrpE are required for fully efficient folding. Also involved, together with DnaK and GrpE, in the DNA replication of plasmids through activation of initiation proteins. The polypeptide is Chaperone protein DnaJ (Brevibacillus choshinensis).